Consider the following 206-residue polypeptide: ATP-dependent Clp protease proteolytic subunit (206 aa).

Residue S108 is the Nucleophile of the active site. H133 is an active-site residue.

Belongs to the peptidase S14 family. Fourteen ClpP subunits assemble into 2 heptameric rings which stack back to back to give a disk-like structure with a central cavity, resembling the structure of eukaryotic proteasomes.

It localises to the cytoplasm. The catalysed reaction is Hydrolysis of proteins to small peptides in the presence of ATP and magnesium. alpha-casein is the usual test substrate. In the absence of ATP, only oligopeptides shorter than five residues are hydrolyzed (such as succinyl-Leu-Tyr-|-NHMec, and Leu-Tyr-Leu-|-Tyr-Trp, in which cleavage of the -Tyr-|-Leu- and -Tyr-|-Trp bonds also occurs).. In terms of biological role, cleaves peptides in various proteins in a process that requires ATP hydrolysis. Has a chymotrypsin-like activity. Plays a major role in the degradation of misfolded proteins. The protein is ATP-dependent Clp protease proteolytic subunit of Chromohalobacter salexigens (strain ATCC BAA-138 / DSM 3043 / CIP 106854 / NCIMB 13768 / 1H11).